Reading from the N-terminus, the 156-residue chain is Proline dehydrogenase transcriptional activator (156 aa).

Residues L10–D71 form the HTH asnC-type domain. Residues V29–K48 constitute a DNA-binding region (H-T-H motif).

Its function is as follows. Transcriptional activator of the putA gene in response to proline. The protein is Proline dehydrogenase transcriptional activator (putR) of Rhizobium radiobacter (Agrobacterium tumefaciens).